Here is a 479-residue protein sequence, read N- to C-terminus: Monodictyphenone cluster transcriptional coactivator mdpA (479 aa).

An HTH iclR-type domain is found at 77–147; sequence LAVQNQLLAC…DPGQVAHSAL (71 aa). The H-T-H motif DNA-binding region spans 107 to 126; it reads IKDVAELAGVPETHLSRIIR. Disordered regions lie at residues 281 to 305 and 314 to 333; these read GPTA…HKHD and TAST…TTNS. Over residues 289–298 the composition is skewed to pro residues; sequence HPNPIRPPTP. Residues 314-323 show a composition bias toward low complexity; the sequence is TASTTPASSH.

Its subcellular location is the nucleus. Transcriptional coactivator; part of the gene cluster that mediates the biosynthesis of monodictyphenone, a prenyl xanthone derivative. With mdpE, coregulates the production of monodictyphenone. The protein is Monodictyphenone cluster transcriptional coactivator mdpA of Emericella nidulans (strain FGSC A4 / ATCC 38163 / CBS 112.46 / NRRL 194 / M139) (Aspergillus nidulans).